The sequence spans 396 residues: Phosphoglycerate kinase (396 aa).

Substrate is bound by residues 21-23, Arg36, 59-62, Arg118, and Arg151; these read DFN and HFDR. ATP contacts are provided by residues Lys201, Glu323, and 353–356; that span reads GGDT.

It belongs to the phosphoglycerate kinase family. As to quaternary structure, monomer.

The protein resides in the cytoplasm. It carries out the reaction (2R)-3-phosphoglycerate + ATP = (2R)-3-phospho-glyceroyl phosphate + ADP. It participates in carbohydrate degradation; glycolysis; pyruvate from D-glyceraldehyde 3-phosphate: step 2/5. This is Phosphoglycerate kinase from Caulobacter vibrioides (strain ATCC 19089 / CIP 103742 / CB 15) (Caulobacter crescentus).